A 702-amino-acid chain; its full sequence is Transposon Tn7 transposition protein TnsB (702 aa).

Positions 1–139 (MWQINEVVLF…GQTPNALIPD (139 aa)) are DNA-binding domain 1 (DBD1). The H-T-H motif DNA-binding region spans 105–124 (VEHVVQEHKVTKATVYKLLR). A disordered region spans residues 137–160 (IPDYKNSGAPGERRSATGTAKIGR). The interval 140–172 (YKNSGAPGERRSATGTAKIGRAREYGKGEGTKV) is linker 1. Positions 173–233 (TPEIERLFRL…QFRYFYDREY (61 aa)) are DNA-binding domain 2 (DBD2). The interval 234 to 267 (PKAQRLKSRVKAGVYKKDVRPLSSTATSQALGPG) is linker 2. The 219-residue stretch at 262 to 480 (QALGPGSRYE…IPVQLWQWGM (219 aa)) folds into the Integrase catalytic domain. Residues 268-582 (SRYEIDATIA…RSRQFKGLSF (315 aa)) form a catalytic domain (CD) region. The interval 589-702 (QAQEKHNKAN…FQDPPEKDES (114 aa)) is C-terminal domain. The disordered stretch occupies residues 623-702 (KLTPSTTEPK…FQDPPEKDES (80 aa)).

As to quaternary structure, heteromer with TnsA.

Sequence-specific, DNA-binding protein required for Tn7 transposition. Recognizes sequences necessary for recombination at both left and right ends of Tn7 and, together with TnsA, forms the transposase. TnsB executes the 3'-DNA strand breakage and joining reactions. TnsB binding introduces DNA bending. There are 3 DNA-binding sites in the left and 4 in the right end of Tn7; as TnsB levels increase more TnsB is bound, suggesting high protein levels contribute to transposon immunity. Binding of TnsB to the transposon right end represses expression of the downstream transposition genes. TnsABC + TnsD promote high-frequency insertion of Tn7 into a specific target site known as att-Tn7 whereas TnsABC + TnsE promote low-frequency insertion into many different sites. The chain is Transposon Tn7 transposition protein TnsB from Escherichia coli.